Consider the following 259-residue polypeptide: Type III pantothenate kinase (259 aa).

ATP is bound at residue 6 to 13 (DVGNTNCT). Position 107 to 110 (107 to 110 (GSDR)) interacts with substrate. The active-site Proton acceptor is the aspartate 109. Aspartate 129 serves as a coordination point for K(+). Threonine 132 lines the ATP pocket. Threonine 184 is a binding site for substrate.

Belongs to the type III pantothenate kinase family. Homodimer. The cofactor is NH4(+). It depends on K(+) as a cofactor.

It localises to the cytoplasm. The enzyme catalyses (R)-pantothenate + ATP = (R)-4'-phosphopantothenate + ADP + H(+). The protein operates within cofactor biosynthesis; coenzyme A biosynthesis; CoA from (R)-pantothenate: step 1/5. In terms of biological role, catalyzes the phosphorylation of pantothenate (Pan), the first step in CoA biosynthesis. This is Type III pantothenate kinase from Listeria monocytogenes serovar 1/2a (strain ATCC BAA-679 / EGD-e).